Reading from the N-terminus, the 3685-residue chain is Dystrophin (3685 aa).

Positions 1 to 240 (MLWWEEVEDC…YITSLFQVLP (240 aa)) are actin-binding. Calponin-homology (CH) domains lie at 15–119 (DVQK…LHWQ) and 134–240 (TNSE…QVLP). Residues 63 to 72 (PKEKGSTRVH) are ANK2- and ANK-3 binding. Spectrin repeat units follow at residues 339–447 (VNLD…NLHR), 448–556 (VLMD…LLQD), 559–667 (LKWQ…QISQ), 719–828 (EIRK…WLEY), 830–934 (NNII…ELQT), 943–1045 (RYQE…KLEE), 1048–1154 (NKLR…ALKG), 1157–1263 (EKTV…TLEE), 1266–1367 (ACWH…LLEQ), 1368–1463 (SIQS…LFQK), 1468–1568 (EQRL…QLEK), 1571–1676 (KLSR…LLLE), 1679–1778 (KHME…KASI), 1779–1874 (PLKE…KALE), 1877–1979 (HQWY…TVRE), 1992–2101 (EISY…RFDR), 2104–2208 (EKWR…RLEE), 2211–2318 (NILS…EIEA), 2319–2423 (QIKD…LRAK), 2475–2577 (FNRA…QLNE), 2580–2686 (KDST…ALEE), 2689–2802 (RLLQ…HLEA), 2808–2930 (KRLH…RKID), and 2935–3040 (RLRE…QLHE). Asn-340 carries the post-translational modification Phosphothreonine. Tyr-344 and Leu-348 each carry phosphoserine. Residues Glu-519, Ser-616, and Ser-629 each carry the phosphothreonine modification. An interaction with SYNM region spans residues 1415 to 1913 (SDLTSHEISL…PEPRDERKIK (499 aa)). The region spanning 3055 to 3088 (TSVQGPWERAISPNKVPYYINHETQTTCWDHPKM) is the WW domain. The interval 3058–3408 (QGPWERAISP…TVLEGDNMET (351 aa)) is interaction with SYNM. Residues 3308 to 3364 (KHQAKCNICKECPIIGFRYRSLKHFNYDICQSCFFSGRVAKGHKMHYPMVEYCTPTT) form a ZZ-type; degenerate zinc finger. Zn(2+) contacts are provided by Cys-3313, Cys-3316, Cys-3337, and Cys-3340. A binds to SNTB1 region spans residues 3466 to 3518 (DDEHLLIQHYCQSLNQDSPLSQPRSPAQILISLESEERGELERILADLEEENR). Phosphoserine is present on residues Ser-3483, Ser-3490, and Ser-3500. Disordered stretches follow at residues 3528-3554 (KQQHEHKGLSPLPSPPEMMPTSPQSPR) and 3603-3685 (EAKV…EDTM). Composition is skewed to polar residues over residues 3607–3626 (NGTTVSSPSTSLQRSDSSQP) and 3662–3673 (QLNNSFPSSRGR). Residues Ser-3612, Ser-3613, Ser-3617, Ser-3623, Ser-3624, and Ser-3666 each carry the phosphoserine modification.

In terms of assembly, interacts with SYNM. Interacts with the syntrophins SNTA1, SNTB1, SNTB2, SNTG1 and SNTG2. Interacts with KRT19. Component of the dystrophin-associated glycoprotein complex which is composed of three subcomplexes: a cytoplasmic complex comprised of DMD (or UTRN), DTNA and a number of syntrophins, such as SNTB1, SNTB2, SNTG1 and SNTG2, the transmembrane dystroglycan complex, and the sarcoglycan-sarcospan complex. Interacts with DAG1 (betaDAG1) with DMD; the interaction is inhibited by phosphorylation on the PPXY motif of DAG1. Interacts with CMYA5. Directly interacts with ANK2 and ANK3; these interactions do not interfere with betaDAG1-binding and are necessary for proper localization in muscle cells. Identified in a dystroglycan complex that contains at least PRX, DRP2, UTRN, DMD and DAG1. Interacts with DTNB. Interacts with PGM5; the interaction is direct. Interacts with NOS1; localizes NOS1 to sarcolemma in muscle cells. Expressed in muscle fibers accumulating in the costameres of myoplasm at the sarcolemma. Expressed in brain, muscle, kidney, lung and testis. Most tissues contain transcripts of multiple isoforms. Isoform 15: Only isoform to be detected in heart and liver and is also expressed in brain, testis and hepatoma cells.

The protein localises to the cell membrane. Its subcellular location is the sarcolemma. It is found in the cytoplasm. The protein resides in the cytoskeleton. It localises to the postsynaptic cell membrane. Functionally, anchors the extracellular matrix to the cytoskeleton via F-actin. Ligand for dystroglycan. Component of the dystrophin-associated glycoprotein complex which accumulates at the neuromuscular junction (NMJ) and at a variety of synapses in the peripheral and central nervous systems and has a structural function in stabilizing the sarcolemma. Also implicated in signaling events and synaptic transmission. The polypeptide is Dystrophin (Homo sapiens (Human)).